Here is a 301-residue protein sequence, read N- to C-terminus: Mating type protein mtA-1 (301 aa).

Positions 49–104 (APKKKVNGFMGFRSYYSSLFSQFPQKARSPFMTILWQHDPFHNEWDFMCSVYSSIR) form a DNA-binding region, alpha box.

Belongs to the MATALPHA1 family.

It is found in the nucleus. Mating type proteins are sequence specific DNA-binding proteins that act as master switches in fungal differentiation by controlling gene expression in a cell type-specific fashion. Transcriptional activator that induces the transcription of alpha-specific genes. This is Mating type protein mtA-1 (MTA1) from Sordaria fimicola.